The sequence spans 60 residues: Conotoxin Cal6.20 (60 aa).

Residues 1–22 form the signal peptide; it reads MKLTCVLIVAVLILTACQVIAA. 3 cysteine pairs are disulfide-bonded: C32–C42, C35–C48, and C41–C55.

This sequence belongs to the conotoxin O1 superfamily. As to expression, expressed by the venom duct.

The protein localises to the secreted. In terms of biological role, probable neurotoxin. This Californiconus californicus (California cone) protein is Conotoxin Cal6.20.